The following is a 137-amino-acid chain: Fluoride-specific ion channel FluC (137 aa).

4 consecutive transmembrane segments (helical) span residues 11–31 (IAVSLGAIAGALSRYYLSLWF), 42–62 (GTLFINITGCLAMGFFYALAL), 75–95 (LIAVGFLGAYTTFSTYALDTF), and 107–127 (GFYWAGSTILGVISIQIGIIL). 2 residues coordinate Na(+): Gly82 and Thr85.

Belongs to the fluoride channel Fluc/FEX (TC 1.A.43) family.

Its subcellular location is the cell inner membrane. It carries out the reaction fluoride(in) = fluoride(out). Na(+) is not transported, but it plays an essential structural role and its presence is essential for fluoride channel function. In terms of biological role, fluoride-specific ion channel. Important for reducing fluoride concentration in the cell, thus reducing its toxicity. This is Fluoride-specific ion channel FluC from Trichormus variabilis (strain ATCC 29413 / PCC 7937) (Anabaena variabilis).